An 86-amino-acid polypeptide reads, in one-letter code: MENFDKTMKFNYDEIPKEDVKTVLQNVYHTLEERGYNPVNQIVGYLLSGDPAYIPRNNEARNQIRRIDRDDIMEELVSNYLQEKSN.

The protein belongs to the UPF0297 family.

In Staphylococcus saprophyticus subsp. saprophyticus (strain ATCC 15305 / DSM 20229 / NCIMB 8711 / NCTC 7292 / S-41), this protein is UPF0297 protein SSP1144.